We begin with the raw amino-acid sequence, 153 residues long: 3-hydroxyacyl-[acyl-carrier-protein] dehydratase FabZ (153 aa).

His-54 is a catalytic residue.

It belongs to the thioester dehydratase family. FabZ subfamily.

The protein localises to the cytoplasm. The catalysed reaction is a (3R)-hydroxyacyl-[ACP] = a (2E)-enoyl-[ACP] + H2O. Involved in unsaturated fatty acids biosynthesis. Catalyzes the dehydration of short chain beta-hydroxyacyl-ACPs and long chain saturated and unsaturated beta-hydroxyacyl-ACPs. The protein is 3-hydroxyacyl-[acyl-carrier-protein] dehydratase FabZ of Shewanella loihica (strain ATCC BAA-1088 / PV-4).